A 1364-amino-acid polypeptide reads, in one-letter code: Serine protease SepA autotransporter (1364 aa).

An N-terminal signal peptide occupies residues 1 to 56; the sequence is MNKIYYLKYCHITKSLIAVSELARRVTCKSHRRLSRRVILTSVAALSLSSAWPALS. The region spanning 57 to 307 is the Peptidase S6 domain; it reads ATVSAEIPYQ…VVTTQDFLGQ (251 aa). Residues histidine 134, aspartate 162, and serine 267 each act as charge relay system in the active site. The 267-residue stretch at 1098–1364 folds into the Autotransporter domain; sequence DTQGDAGVWA…AINANFRYVF (267 aa).

Cleaved to release the mature protein from the outer membrane. Cleavage is performed by an unknown protease.

It is found in the periplasm. It localises to the secreted. The protein resides in the cell surface. The protein localises to the cell outer membrane. Its activity is regulated as follows. Inhibited by the serine protease inhibitor PMSF, but not by benzamidine, alpha 1-antitrypsin, alpha 1-antichymotrypsin. Not inhibited by metalloprotease inhibitors such as EDTA and orthophenanthroline. Major protein secreted in laboratory media showing proteolytic activity. May be involved in invasion and destruction of host intestinal epithelium. This Shigella flexneri protein is Serine protease SepA autotransporter (sepA).